Consider the following 150-residue polypeptide: UPF0756 membrane protein HDEF_0364 (150 aa).

Transmembrane regions (helical) follow at residues 1–21 (MMFF…GLIS), 28–48 (ISVV…FPWV), 51–71 (YALK…IASG), 88–108 (ILGI…VSLM), and 123–143 (ILGV…AGLL).

It belongs to the UPF0756 family.

It localises to the cell membrane. The sequence is that of UPF0756 membrane protein HDEF_0364 from Hamiltonella defensa subsp. Acyrthosiphon pisum (strain 5AT).